Here is a 196-residue protein sequence, read N- to C-terminus: UMP-CMP kinase (196 aa).

An ATP-binding site is contributed by 13–18; that stretch reads GAGKGT. Phosphoserine is present on S33. Residues 33 to 63 form an NMP region; it reads SAGELLRDERKNPDSQYGELIEKYIKDGKIV. R39 provides a ligand contact to a ribonucleoside 5'-phosphate. 2 positions are modified to N6-acetyllysine: K43 and K55. A ribonucleoside 5'-phosphate is bound by residues 61–63 and 93–96; these read KIV and GFPR. CMP is bound at residue N100. K106 is subject to N6-succinyllysine. Positions 133–143 are LID; the sequence is ERGKSSGRSDD. R134 provides a ligand contact to ATP. The a ribonucleoside 5'-phosphate site is built by R140 and R151. Residue K179 coordinates ATP. S180 carries the post-translational modification Phosphoserine.

It belongs to the adenylate kinase family. UMP-CMP kinase subfamily. As to quaternary structure, monomer. The cofactor is Mg(2+).

The protein localises to the nucleus. It localises to the cytoplasm. The catalysed reaction is CMP + ATP = CDP + ADP. It catalyses the reaction dCMP + ATP = dCDP + ADP. The enzyme catalyses UMP + ATP = UDP + ADP. It carries out the reaction a 2'-deoxyribonucleoside 5'-diphosphate + ATP = a 2'-deoxyribonucleoside 5'-triphosphate + ADP. The catalysed reaction is a ribonucleoside 5'-diphosphate + ATP = a ribonucleoside 5'-triphosphate + ADP. In terms of biological role, catalyzes the phosphorylation of pyrimidine nucleoside monophosphates at the expense of ATP. Plays an important role in de novo pyrimidine nucleotide biosynthesis. Has preference for UMP and CMP as phosphate acceptors. Also displays broad nucleoside diphosphate kinase activity. The chain is UMP-CMP kinase from Sus scrofa (Pig).